The following is a 234-amino-acid chain: uncharacterized protein (234 aa).

Residues 13–32 traverse the membrane as a helical segment; it reads KSINYYIFFFQYTLVYNTIQ. 2 disordered regions span residues 102-130 and 159-185; these read HSKT…SSNS and ESDS…SEYE. The span at 103–130 shows a compositional bias: low complexity; the sequence is SKTTSLPFSSSSPQSSSSSSSSSSSSNS. The segment covering 167-185 has biased composition (acidic residues); it reads EFDSESNSDFDSESESEYE.

Its subcellular location is the membrane. This is an uncharacterized protein from Dictyostelium discoideum (Social amoeba).